The primary structure comprises 79 residues: Acyl carrier protein (79 aa).

The 76-residue stretch at 4-79 folds into the Carrier domain; that stretch reads EQILVDVQEA…DVVAYIETKL (76 aa). An O-(pantetheine 4'-phosphoryl)serine modification is found at serine 39.

This sequence belongs to the acyl carrier protein (ACP) family. Post-translationally, 4'-phosphopantetheine is transferred from CoA to a specific serine of apo-ACP by AcpS. This modification is essential for activity because fatty acids are bound in thioester linkage to the sulfhydryl of the prosthetic group.

The protein localises to the cytoplasm. It participates in lipid metabolism; fatty acid biosynthesis. In terms of biological role, carrier of the growing fatty acid chain in fatty acid biosynthesis. This Exiguobacterium sp. (strain ATCC BAA-1283 / AT1b) protein is Acyl carrier protein.